A 109-amino-acid chain; its full sequence is Putative gametogenetin-binding protein 1 (109 aa).

Residues 24 to 109 (KAFRSTDTVG…KGEMGNWPPE (86 aa)) form an interaction with GGN region.

In terms of assembly, interacts with CCDC159. Interacts with GGN.

It localises to the cytoplasm. The protein resides in the membrane. It is found in the golgi apparatus. Functionally, may be involved in spermatogenesis. This is Putative gametogenetin-binding protein 1 (GGNBP1) from Homo sapiens (Human).